Reading from the N-terminus, the 576-residue chain is Arginine--tRNA ligase (576 aa).

Residues 126 to 136 carry the 'HIGH' region motif; that stretch reads ANPTGPMHIGH.

This sequence belongs to the class-I aminoacyl-tRNA synthetase family. In terms of assembly, monomer.

It is found in the cytoplasm. It carries out the reaction tRNA(Arg) + L-arginine + ATP = L-arginyl-tRNA(Arg) + AMP + diphosphate. This Rickettsia rickettsii (strain Iowa) protein is Arginine--tRNA ligase.